Reading from the N-terminus, the 616-residue chain is Chaperone protein HscA (616 aa).

The protein belongs to the heat shock protein 70 family.

Chaperone involved in the maturation of iron-sulfur cluster-containing proteins. Has a low intrinsic ATPase activity which is markedly stimulated by HscB. Involved in the maturation of IscU. In Escherichia coli O7:K1 (strain IAI39 / ExPEC), this protein is Chaperone protein HscA.